Consider the following 328-residue polypeptide: Eukaryotic translation initiation factor 3 subunit I (328 aa).

5 WD repeats span residues 8–49, 50–89, 145–184, 189–228, and 286–327; these read GHER…GTYE, GHTGAIWTCDINKSSTLMVSGAADNTMRLWDVKTGKQLYK, TRESKATVAGWSYLSKFLFTGHEDGSVSRYDAITGEFVES, NSGSTITDLQFYPDRTYFITSCKDTTAKAIDVDSFEVIKT, and GHFG…FKYT.

Belongs to the eIF-3 subunit I family. As to quaternary structure, component of the eukaryotic translation initiation factor 3 (eIF-3) complex. The eIF-3 complex appears to include tif32/eif3a, SPAC25G10.08/eif3b, tif33/eif3c, SPBC4C3.07/eif3f, tif35/eif3g and sum1/eif3i. This set of common subunits may also associate exclusively with either moe1/eif3d and int6/eif3e, or with SPAC821.05/eif3h and SPAC1751.03/eif3m. The eIF-3 complex may also include SPAC3A12.13c/eif3j.

It localises to the cytoplasm. The protein localises to the nucleus. Functionally, component of the eukaryotic translation initiation factor 3 (eIF-3) complex, which is involved in protein synthesis of a specialized repertoire of mRNAs and, together with other initiation factors, stimulates binding of mRNA and methionyl-tRNAi to the 40S ribosome. The eIF-3 complex specifically targets and initiates translation of a subset of mRNAs involved in cell proliferation. In Schizosaccharomyces pombe (strain 972 / ATCC 24843) (Fission yeast), this protein is Eukaryotic translation initiation factor 3 subunit I (sum1).